The primary structure comprises 214 residues: Rac-like GTP-binding protein 1 (214 aa).

Residues 17-24, 20-25, threonine 42, 64-68, glycine 67, 122-125, 123-125, and 164-165 each bind GTP; these read GDGAVGKT, AVGKTC, DTAGQ, TKLD, KLD, and SK. An Effector region motif is present at residues 39 to 47; that stretch reads YIPTVFDNF.

It belongs to the small GTPase superfamily. Rho family. As to quaternary structure, may interact with MPK1/MAPK6. Binds to RBOHB, preferentially in the GTP-bound form. Interacts with CCR1 in a GTP-dependent manner. In terms of processing, may be palmitoylated.

Its subcellular location is the cytoplasm. It is found in the membrane. Small GTPase playing a general role in disease resistance signaling pathway. Acts downstream of heterotrimeric G protein alpha subunit. Regulates cell death and reactive oxygen species production, probably through NADPH oxidase. Also involved in sphingolipid elicitor (SE)-dependent defense signaling. Activates phytoalexin production and alters defense-related genes. Down-regulates metallothionein 2b, a reactive oxygen scavenger. May control lignin synthesis through regulation of both NADPH oxidase and CCR1 activities during defense responses. Stimulates lignin synthesis in suspension cell culture. The protein is Rac-like GTP-binding protein 1 (RAC1) of Oryza sativa subsp. japonica (Rice).